A 477-amino-acid chain; its full sequence is Bifunctional protein HldE (477 aa).

Residues 1-321 (MKILKSFTPR…EYEASLHKST (321 aa)) form a ribokinase region. 198 to 201 (NKKE) lines the ATP pocket. Asp266 is an active-site residue. Positions 348–477 (FTNGCFDILH…IQKIKGDLHV (130 aa)) are cytidylyltransferase.

The protein in the N-terminal section; belongs to the carbohydrate kinase PfkB family. In the C-terminal section; belongs to the cytidylyltransferase family. In terms of assembly, homodimer.

The enzyme catalyses D-glycero-beta-D-manno-heptose 7-phosphate + ATP = D-glycero-beta-D-manno-heptose 1,7-bisphosphate + ADP + H(+). It catalyses the reaction D-glycero-beta-D-manno-heptose 1-phosphate + ATP + H(+) = ADP-D-glycero-beta-D-manno-heptose + diphosphate. It participates in nucleotide-sugar biosynthesis; ADP-L-glycero-beta-D-manno-heptose biosynthesis; ADP-L-glycero-beta-D-manno-heptose from D-glycero-beta-D-manno-heptose 7-phosphate: step 1/4. Its pathway is nucleotide-sugar biosynthesis; ADP-L-glycero-beta-D-manno-heptose biosynthesis; ADP-L-glycero-beta-D-manno-heptose from D-glycero-beta-D-manno-heptose 7-phosphate: step 3/4. Catalyzes the phosphorylation of D-glycero-D-manno-heptose 7-phosphate at the C-1 position to selectively form D-glycero-beta-D-manno-heptose-1,7-bisphosphate. Its function is as follows. Catalyzes the ADP transfer from ATP to D-glycero-beta-D-manno-heptose 1-phosphate, yielding ADP-D-glycero-beta-D-manno-heptose. The polypeptide is Bifunctional protein HldE (Sulfurimonas denitrificans (strain ATCC 33889 / DSM 1251) (Thiomicrospira denitrificans (strain ATCC 33889 / DSM 1251))).